The primary structure comprises 97 residues: Large ribosomal subunit protein uL23 (97 aa).

The protein belongs to the universal ribosomal protein uL23 family. Part of the 50S ribosomal subunit. Contacts protein L29, and trigger factor when it is bound to the ribosome.

Its function is as follows. One of the early assembly proteins it binds 23S rRNA. One of the proteins that surrounds the polypeptide exit tunnel on the outside of the ribosome. Forms the main docking site for trigger factor binding to the ribosome. The protein is Large ribosomal subunit protein uL23 of Brucella anthropi (strain ATCC 49188 / DSM 6882 / CCUG 24695 / JCM 21032 / LMG 3331 / NBRC 15819 / NCTC 12168 / Alc 37) (Ochrobactrum anthropi).